Here is a 565-residue protein sequence, read N- to C-terminus: Effector protease OspD3 (565 aa).

Belongs to the Toxin_15 family.

It localises to the secreted. Effector protease that disrupts necroptosis in host cells by mediating proteolytic cleavage of host RIPK1 and RIPK3. This chain is Effector protease OspD3, found in Shigella flexneri.